The primary structure comprises 29 residues: Mycofactocin precursor peptide (29 aa).

The protein belongs to the mycofactocin precursor peptide family. The post-translational modifications that lead to mycofactocin involve oxidative decarboxylation of the C-terminal tyrosine residue catalyzed by MftC, introduction of a tyramine-valine cross-link, removal of the modified C-terminal dipeptide by MftE. The released dipeptide then undergoes oxidative deamination by MftD, glycosylation by MftF and methylation by an unknown enzyme.

Functionally, precursor peptide that leads to mycofactocin (MFT) after extensive post-translational modifications by enzymes encoded by adjacent genes. Mycofactocin acts as a redox cofactor of nicotinamide-dependent oxidoreductases encoded in the same locus. This chain is Mycofactocin precursor peptide, found in Mycobacterium tuberculosis (strain ATCC 25618 / H37Rv).